A 306-amino-acid chain; its full sequence is Ornithine carbamoyltransferase (306 aa).

Carbamoyl phosphate is bound by residues 46 to 49 (STRT), Gln-73, Arg-97, and 124 to 127 (HPTQ). Residues Asn-156, Asp-220, and 224–225 (SM) contribute to the L-ornithine site. Carbamoyl phosphate contacts are provided by residues 260–261 (CL) and Arg-288.

The protein belongs to the aspartate/ornithine carbamoyltransferase superfamily. OTCase family.

The protein resides in the cytoplasm. It catalyses the reaction carbamoyl phosphate + L-ornithine = L-citrulline + phosphate + H(+). It functions in the pathway amino-acid degradation; L-arginine degradation via ADI pathway; carbamoyl phosphate from L-arginine: step 2/2. Its function is as follows. Reversibly catalyzes the transfer of the carbamoyl group from carbamoyl phosphate (CP) to the N(epsilon) atom of ornithine (ORN) to produce L-citrulline. In Campylobacter jejuni subsp. jejuni serotype O:6 (strain 81116 / NCTC 11828), this protein is Ornithine carbamoyltransferase.